A 338-amino-acid polypeptide reads, in one-letter code: 1-aminocyclopropane-1-carboxylate deaminase (338 aa).

Lys51 is modified (N6-(pyridoxal phosphate)lysine). Ser78 functions as the Nucleophile in the catalytic mechanism.

Belongs to the ACC deaminase/D-cysteine desulfhydrase family. In terms of assembly, homotrimer. The cofactor is pyridoxal 5'-phosphate.

The catalysed reaction is 1-aminocyclopropane-1-carboxylate + H2O = 2-oxobutanoate + NH4(+). Its function is as follows. Catalyzes a cyclopropane ring-opening reaction, the irreversible conversion of 1-aminocyclopropane-1-carboxylate (ACC) to ammonia and alpha-ketobutyrate. Allows growth on ACC as a nitrogen source. This chain is 1-aminocyclopropane-1-carboxylate deaminase, found in Burkholderia orbicola (strain MC0-3).